An 873-amino-acid polypeptide reads, in one-letter code: Disks large homolog 1 (873 aa).

Positions 4–64 constitute an L27 domain; the sequence is RQKDAQRALQ…YYEVSLQDTE (61 aa). Positions 62–135 are disordered; it reads DTEDKPIEDS…SPHIPGDARP (74 aa). The segment covering 63-77 has biased composition (basic and acidic residues); it reads TEDKPIEDSSLKSRE. The segment covering 85–96 has biased composition (polar residues); sequence WNLSVPPSTTGP. 2 PDZ domains span residues 230–317 and 325–412; these read EITL…RRRK and DVKL…AKPT. Positions 441–456 are enriched in polar residues; that stretch reads SYLSQPLTPATPSRYS. The tract at residues 441-464 is disordered; the sequence is SYLSQPLTPATPSRYSPVSKGMLG. One can recognise a PDZ 3 domain in the interval 474 to 555; it reads KIVLHRGTTG…TVTIIAQYRP (82 aa). The disordered stretch occupies residues 636 to 662; sequence NKDSGEQDTSDVDQHVTSNASDSESSF. A compositionally biased stretch (polar residues) spans 650–662; sequence HVTSNASDSESSF. In terms of domain architecture, Guanylate kinase-like spans 683–858; it reads SRPVIILGPM…IYNQVKQIIE (176 aa).

The protein belongs to the MAGUK family.

The protein resides in the cell membrane. Its subcellular location is the endoplasmic reticulum membrane. The protein localises to the cell junction. It is found in the apical cell membrane. Essential multidomain scaffolding protein required for normal development. Recruits channels, receptors and signaling molecules to discrete plasma membrane domains in polarized cells. Promotes epithelial cell layer barrier function via maintaining cell-cell adhesion. May play a role in adherens junction assembly, signal transduction and cell proliferation. May play a role in synapse assembly and function. The chain is Disks large homolog 1 (dlg1) from Danio rerio (Zebrafish).